Here is a 90-residue protein sequence, read N- to C-terminus: Co-chaperonin GroES (90 aa).

This sequence belongs to the GroES chaperonin family. As to quaternary structure, heptamer of 7 subunits arranged in a ring. Interacts with the chaperonin GroEL.

It localises to the cytoplasm. Its function is as follows. Together with the chaperonin GroEL, plays an essential role in assisting protein folding. The GroEL-GroES system forms a nano-cage that allows encapsulation of the non-native substrate proteins and provides a physical environment optimized to promote and accelerate protein folding. GroES binds to the apical surface of the GroEL ring, thereby capping the opening of the GroEL channel. The protein is Co-chaperonin GroES of Bacteroides thetaiotaomicron (strain ATCC 29148 / DSM 2079 / JCM 5827 / CCUG 10774 / NCTC 10582 / VPI-5482 / E50).